The following is a 586-amino-acid chain: Eukaryotic translation initiation factor 3 subunit D (586 aa).

Residues 102 to 176 form a disordered region; it reads SAKRTFGRGG…DKPQRTREPS (75 aa). Over residues 162 to 174 the composition is skewed to basic and acidic residues; the sequence is GWKDYDKPQRTRE. Residues 301 to 315 are RNA gate; it reads SLDLVTVNENAADAP. The disordered stretch occupies residues 567-586; the sequence is EEEEEVAAEEQEAAEEEAEE.

Belongs to the eIF-3 subunit D family. In terms of assembly, component of the eukaryotic translation initiation factor 3 (eIF-3) complex.

It is found in the cytoplasm. Its function is as follows. mRNA cap-binding component of the eukaryotic translation initiation factor 3 (eIF-3) complex, which is involved in protein synthesis of a specialized repertoire of mRNAs and, together with other initiation factors, stimulates binding of mRNA and methionyl-tRNAi to the 40S ribosome. The eIF-3 complex specifically targets and initiates translation of a subset of mRNAs involved in cell proliferation. In the eIF-3 complex, eif3d specifically recognizes and binds the 7-methylguanosine cap of a subset of mRNAs. This is Eukaryotic translation initiation factor 3 subunit D from Aspergillus niger (strain ATCC MYA-4892 / CBS 513.88 / FGSC A1513).